The chain runs to 350 residues: Bifunctional nitrilase/nitrile hydratase NIT4B (350 aa).

Positions 30-302 constitute a CN hydrolase domain; sequence VRATVVQAST…EALISADLDL (273 aa). Glu70 functions as the Proton acceptor in the catalytic mechanism. Residue Lys157 is part of the active site. Cys191 functions as the Nucleophile in the catalytic mechanism.

It belongs to the carbon-nitrogen hydrolase superfamily. Nitrilase family. Highly expressed in leaves and cotyledons, lower expression in stems and roots.

It carries out the reaction L-asparagine = 3-cyano-L-alanine + H2O. It catalyses the reaction 3-cyano-L-alanine + 2 H2O = L-aspartate + NH4(+). Functionally, involved in the cyanide detoxification pathway. Has nitrilase and nitrile-hydratase activity in the ratio 3.3:1, producing both asparagine and aspartic acid from beta-cyano-L-alanine (Ala(CN)). Can also use 3-phenylpropionitrile as substrate, but not indole-3-acetonitrile. The chain is Bifunctional nitrilase/nitrile hydratase NIT4B (NIT4B) from Lupinus angustifolius (Narrow-leaved blue lupine).